A 2878-amino-acid chain; its full sequence is Trinucleotide repeat-containing gene 18 protein (2878 aa).

Disordered stretches follow at residues 1–54 (MDGR…KYMA) and 102–194 (TQKD…SSRL). Residues 119 to 128 (TPSSRTPSGH) are compositionally biased toward polar residues. Composition is skewed to basic and acidic residues over residues 137-149 (SSREGTGKDRAGR), 158-169 (GKKDPRAREEVS), and 179-194 (QEARAEGRQDRGSSRL). Ser199 is modified (phosphoserine). Disordered regions lie at residues 259–289 (ARPCGSPLPPPPPLPPKGPPAPPSSTPAGVY), 313–442 (FDER…KWKP), 487–507 (MPRASATCGRPGADLHSAAHG), 540–655 (SPFG…DDEC), 865–1002 (AQEH…ALFT), 1033–1104 (ADGL…LESP), 1127–1146 (LEAQALSTAGPGCREPSEVS), 1171–1228 (LGTQ…DCDL), 1429–1535 (ELVK…DSSS), 1613–1668 (LGLS…DEDE), 1694–1718 (VPKNSKPATGPKLTKRGLAGPRTLK), and 1737–1787 (EARS…GEQA). Pro residues predominate over residues 264 to 283 (SPLPPPPPLPPKGPPAPPSS). Composition is skewed to basic and acidic residues over residues 327 to 337 (RDVRAREREPG) and 350 to 362 (RLERPEVLREKSS). Residues 376 to 390 (PPAARSSRSSPDARA) show a composition bias toward low complexity. Residues 396 to 411 (ELLKPEADPRPCERAP) show a composition bias toward basic and acidic residues. Position 540 is a phosphoserine (Ser540). Lys549 participates in a covalent cross-link: Glycyl lysine isopeptide (Lys-Gly) (interchain with G-Cter in SUMO2). 2 stretches are compositionally biased toward basic and acidic residues: residues 580-589 (LKRDPERPES) and 865-881 (AQEHRTEMEEKISKRSL). Residues 958 to 969 (SSPPPASPPPTP) are compositionally biased toward pro residues. A compositionally biased stretch (basic and acidic residues) spans 972-993 (TRKEEAPENVVEKKDLELEKET). Phosphoserine occurs at positions 1053 and 1062. Over residues 1068–1088 (EPPRDSPEEEQLADREVKAEV) the composition is skewed to basic and acidic residues. Residues 1410–1442 (LDFRMRLAEVQRRYKEKQRELVKLQRRRDSGDR) are a coiled coil. Residues 1429-1448 (ELVKLQRRRDSGDRHEDAHR) show a composition bias toward basic and acidic residues. The span at 1449-1463 (SLARRGPGRPRKRTH) shows a compositional bias: basic residues. A Phosphoserine modification is found at Ser1469. Low complexity predominate over residues 1478 to 1492 (SSSGKGLSSKSLLTS). The segment covering 1745-1775 (SSEEDSFDQDDSSEEEEEELEEEEEDEEEEG) has biased composition (acidic residues). Residues Ser1789 and Ser1795 each carry the phosphoserine modification. Over residues 1825–1835 (EQKARKKEERQ) the composition is skewed to basic and acidic residues. Disordered stretches follow at residues 1825 to 2040 (EQKA…GAVS), 2052 to 2080 (FEANQDSSFSEDEHLPRGGATERPLTPAP), and 2226 to 2681 (LLVP…RLPS). Over residues 1876–1890 (AAPGPGSRASGPSSP) the composition is skewed to low complexity. Composition is skewed to basic and acidic residues over residues 1891-1900 (DKAKLVSEKG), 1925-1936 (LWTRRRSERIFL), 1966-1978 (PRKDTGRAKDRKD), and 2024-2034 (RGKEAKKENRG). Thr2077 is modified (phosphothreonine). Residues 2238–2247 (TSKDTGEVKE) show a composition bias toward basic and acidic residues. Basic residues predominate over residues 2261–2270 (ARGRGRKPST). Basic and acidic residues-rich tracts occupy residues 2307–2316 (STPEPVDKRA) and 2409–2419 (AKEALLLREDP). Composition is skewed to low complexity over residues 2460 to 2470 (EPGPGLPLEDP), 2491 to 2520 (TTSSSSSSSSSSSSSSSSSSSSSSSSSGSE), and 2540 to 2578 (RTCSAASSRASSPASSSSSSSSSSSSSSSSSSSSSSSST). Residues 2579–2591 (TDEDSSCSSDEEA) show a composition bias toward acidic residues. Residues 2631 to 2641 (TQPPPQPPPQP) show a composition bias toward pro residues. Position 2681 is a phosphoserine (Ser2681). Residues 2727–2872 (EMIRIGDCAV…PTTGMIFSTD (146 aa)) form the BAH domain.

This chain is Trinucleotide repeat-containing gene 18 protein (Tnrc18), found in Mus musculus (Mouse).